Reading from the N-terminus, the 404-residue chain is Putative replication protein C (404 aa).

The interval 249 to 287 (PDQIERHKQNSHPESTNEFEPSSREEQGERPSPAIEPQR) is disordered.

This sequence to A.rhizogenes possible replication protein C (RepC).

The chain is Putative replication protein C from Sinorhizobium fredii (strain NBRC 101917 / NGR234).